The sequence spans 194 residues: Calcium channel flower (194 aa).

A run of 3 helical transmembrane segments spans residues 34–54, 59–79, and 107–127; these read LLGIVAAFFAILFGLWNVFSI, VSCLVAGIIQMVAGFVVMLLE, and GLYIAMAIPPIILCFGLASLF.

Belongs to the calcium channel flower family. As to quaternary structure, homomultimer. Associates with the dally/ magu complex.

The protein localises to the cell membrane. Its subcellular location is the cytoplasmic vesicle. The protein resides in the secretory vesicle. It localises to the synaptic vesicle membrane. It is found in the presynaptic cell membrane. The protein localises to the endosome. With respect to regulation, channel activity is inhibited by La(3+), which reduces Ca(2+) influx and thus inhibits it's function in promoting activity-dependent bulk endocytosis (ADBE) in response to high stimuli. Functionally, transmembrane protein which mediates synaptic endocytosis, fitness-based cell culling, neuronal culling, morphogen gradient scaling, and calcium transport. Regulates synaptic endocytosis and hence couples exo- with endocytosis. Controls two major modes of synaptic vesicle (SV) endocytosis in the synaptic boutons of neuromuscular junctions (NMJs); Ca(2+) channel-independent Clathrin-mediated endocytosis (CME) in response to mild stimulation, and Ca(2+) channel-dependent activity-dependent bulk endocytosis (ADBE) in response to strong stimulation. Functions in ADBE and subsequent SV reformation from bulk endosomes by initiating Ca(2+) channel-dependent phosphatidylinositol 4,5-bisphosphate (PtdIns(4,5)P2) compartmentalization in synaptic boutons. There it acts at the periactive zone to provide the low Ca(2+) levels required to initiate Calcineurin activation and upregulate PtdIns(4,5)P2. Conversely PtdIns(4,5)P2 enhances fwe Ca(2+) channel-activity, establishing a positive feedback loop that induces PtdIns(4,5)P2 microdomain at the periactive zone. These microdomains trigger bulk membrane invagination (i.e. ADBE) by triggering actin polymerization while also promoting localization of fwe to bulk endosomes, thereby removing the ADBE trigger to reduce endocytosis and prevent excess membrane uptake. PtdIns(4,5)P2 then promotes SV reformation from the bulk endosomes, to coordinate ADBE and subsequent SV reformation. Different combinations of the flower isoforms at the cell membrane are also required for the identification and elimination of suboptimal or supernumerary cells during development, regeneration, and adulthood. Required for the recognition and elimination of unfit cells in the developing wing during cell competition. In the developing pupal retina, mediates the elimination of unwanted postmitotic neurons, including supernumerary photoreceptor neurons that form at the periphery of the retina and are contained within incomplete ommatidia units. Also required for efficient elimination and replacement of old neurons by newly generated neurons during regeneration in the adult brain following mechanical injury. Downstream of the flower fitness fingerprints, cells identified as unwanted or unfit are eliminated via apoptosis through the expression of ahuizotl (azot). However, the cells marked for elimination by the flower isoforms only undergo apoptosis if additional thresholds are met; (1) their neighboring fit/healthy cells express different levels of the fwe isoforms, and (2) the levels of the protective signal SPARC expressed by the loser or unwanted cells are unable to inhibit caspase activation. These additional thresholds for flower-mediated apoptosis, allows useful cells to recover from transient and limited stress before they are unnecessarily eliminated. Functions with dally and magu in a mechanism of scaling, which utilises apoptosis to ensure that the dpp morphogen gradient, which mediates organ growth, remains proportional to the size of the growing wing. In this mechanism, fwe represses dally- and Magu-dependent activity in expanding the gradient, and dally/Magu inhibits fwe-dependent apoptosis to keep cell death rate low. When the levels of these different proteins are optimally regulated the gradient correctly scales with organ growth but when this fails, fwe-mediated apoptosis is activated to trim the developing tissue to match the correct size of the gradient. The sequence is that of Calcium channel flower from Drosophila erecta (Fruit fly).